Reading from the N-terminus, the 1444-residue chain is Bromodomain-containing protein 4 (1444 aa).

7 disordered regions span residues 1–44 (MGDG…PKRQ), 154–217 (VEIS…PQPI), 279–362 (AAPP…KQQE), 492–523 (PVMA…ERAQ), 540–645 (AALS…GGAA), 722–986 (CLRK…SSQP), and 1020–1422 (TSLM…RREA). Positions 11–27 (SGSSSSQGQPSSQAPSS) are enriched in low complexity. Residues 43 to 149 (RQTNQLQYLL…KVFLTKISEM (107 aa)) form the Bromo 1 domain. Positions 186–196 (ASPQTRGLSNL) are enriched in polar residues. Residues 206–216 (PQGPPTLPPQP) are compositionally biased toward pro residues. Positions 303-319 (TTTPTANDQLNESSPAE) are enriched in polar residues. Over residues 327–347 (PRRDNTRPSKLPKKEAPDSQH) the composition is skewed to basic and acidic residues. Positions 358–467 (PKQQEQLRYC…DVFEMRFAKM (110 aa)) constitute a Bromo 2 domain. Low complexity predominate over residues 498–511 (SSSDTSSDSSSESE). Residues 498 to 517 (SSSDTSSDSSSESESSTDDS) are NPS region. The BID region stretch occupies residues 538-610 (QLAALSQPQA…SKKLSKKEGG (73 aa)). Positions 549 to 569 (KPKKKEKEKKEKKKDKHKKKA) are enriched in basic residues. An NET domain is found at 633–730 (DTEEDLGLTG…SCLRKKKKPA (98 aa)). Low complexity-rich tracts occupy residues 746 to 760 (GTSS…SSSS), 800 to 823 (LQPQ…HPSP), 919 to 954 (LQQS…QQQH), and 1036 to 1046 (PSLLQSVQVQS). The span at 1090–1109 (PLQTAQTQPGQHKVSMPSTK) shows a compositional bias: polar residues. Over residues 1110 to 1121 (AQQIIQQQQATQ) the composition is skewed to low complexity. The segment at 1126–1444 (RQHKADSYNS…LMAIFEENLF (319 aa)) is C-terminal (CTD) region. Positions 1151-1163 (QIPQYSLVHQSPS) are enriched in polar residues. Positions 1246–1255 (QDKEKFKQEP) are enriched in basic and acidic residues. Low complexity predominate over residues 1282-1296 (SSTTPSSGLKSSSDS). Residues 1298 to 1357 (EQFRRAAREKEEREKALKAQVEQAEKDRLRKEQEKLRGRDEEDSIEPPRRPLEEPRRRQE) show a composition bias toward basic and acidic residues. The span at 1367–1389 (QHQTQAQAQTLNPAQSPSASQPT) shows a compositional bias: low complexity. The segment covering 1405 to 1422 (QQREMARRREQERRRREA) has biased composition (basic and acidic residues).

Belongs to the BET family. In terms of tissue distribution, widely expressed.

It is found in the nucleus. The protein localises to the chromosome. In terms of biological role, chromatin reader protein that recognizes and binds acetylated histones and plays a key role in transmission of epigenetic memory across cell divisions and transcription regulation. Remains associated with acetylated chromatin throughout the entire cell cycle and provides epigenetic memory for postmitotic G1 gene transcription by preserving acetylated chromatin status and maintaining high-order chromatin structure. During interphase, plays a key role in regulating the transcription of signal-inducible genes by associating with the P-TEFb complex and recruiting it to promoters. This is Bromodomain-containing protein 4 (brd4) from Danio rerio (Zebrafish).